We begin with the raw amino-acid sequence, 736 residues long: MSNEQKCPFSGTHGARTTVGTQSNRDWWPKVLNLNILHQHAPAANPMDADFDYSETFKTLDFGALKQDLYALMTTSQDWWPADWGHYGGLFIRMAWHSAGTYRTGDGRGGAGTGNQRFAPINSWPDNGNLDKARRLLWPIKQKYGNKISWADLMILAGNCALESMGFKTFGFGGGRVDIWQPEEDIYWGAEREWLATSDKPNSRYSGERNLDNPLAAVQMGLIYVNPEGPDGNPDPVASGRDIRETFARMAMNDEETVALTAGGHTFGKAHGAGDPALVGPEPEAAPIEEQGLGWINKFGSGKGIHATTSGIEGAWKPNPTKWDNGYFDMLFGYEWELTRSPAGAKQWVAKDCKPEHLIPDAHDPSKKHPPMMTTADLAMRFDPIYGPISRRFHQDPAAFADAFARAWFKLTHRDLGPKARYLGPEVPAEDLVWQDPIPAVDHPLIEVTDVASLKAKLLASGLSTAELVSTAWASASTFRGSDKRGGANGARIRLAPQKDWAANQPAQLAKVLGVLEGIQQAFNSAQTGGKKVSLADLIVLGGCAAVEAAAKAAGFAVAVPFTPGRTDASQEQTDAESIAVLEPEADGFRNYQKKTYSVSAEEMLVDKAQLLTLSAPEMTVLVGGLRVLGGNVGGSSDGVFTTTPGTLSNDFFVNLLDMGTVWKPAAESAGRYEGRDRQTGVAKWTASRVDLIFGSNSQLRALAEVYAQNDAQEKFVRDFIAAWSKVMELDRFDLK.

A disordered region spans residues 1 to 21 (MSNEQKCPFSGTHGARTTVGT). A cross-link (tryptophyl-tyrosyl-methioninium (Trp-Tyr) (with M-250)) is located at residues 96–224 (WHSAGTYRTG…LAAVQMGLIY (129 aa)). Catalysis depends on H97, which acts as the Proton acceptor. A cross-link (tryptophyl-tyrosyl-methioninium (Tyr-Met) (with W-96)) is located at residues 224–250 (YVNPEGPDGNPDPVASGRDIRETFARM). H265 is a binding site for heme b.

This sequence belongs to the peroxidase family. Peroxidase/catalase subfamily. Homodimer or homotetramer. The cofactor is heme b. Post-translationally, formation of the three residue Trp-Tyr-Met cross-link is important for the catalase, but not the peroxidase activity of the enzyme.

It carries out the reaction H2O2 + AH2 = A + 2 H2O. The catalysed reaction is 2 H2O2 = O2 + 2 H2O. Its function is as follows. Bifunctional enzyme with both catalase and broad-spectrum peroxidase activity. The polypeptide is Catalase-peroxidase (Dechloromonas aromatica (strain RCB)).